The primary structure comprises 172 residues: Phosphopantetheine adenylyltransferase (172 aa).

Thr-14 provides a ligand contact to substrate. Residues 14-15 (TF) and His-22 each bind ATP. Lys-46, Leu-78, and Arg-92 together coordinate substrate. Residues 93 to 95 (GMR), Glu-103, and 128 to 134 (WLYISST) contribute to the ATP site.

It belongs to the bacterial CoaD family. In terms of assembly, homohexamer. It depends on Mg(2+) as a cofactor.

The protein localises to the cytoplasm. The catalysed reaction is (R)-4'-phosphopantetheine + ATP + H(+) = 3'-dephospho-CoA + diphosphate. It participates in cofactor biosynthesis; coenzyme A biosynthesis; CoA from (R)-pantothenate: step 4/5. Functionally, reversibly transfers an adenylyl group from ATP to 4'-phosphopantetheine, yielding dephospho-CoA (dPCoA) and pyrophosphate. In Solidesulfovibrio magneticus (strain ATCC 700980 / DSM 13731 / RS-1) (Desulfovibrio magneticus), this protein is Phosphopantetheine adenylyltransferase.